Here is a 150-residue protein sequence, read N- to C-terminus: Transthyretin (150 aa).

Positions 1-20 (MGSSSLLLVCLAGMVYLTEA) are cleaved as a signal peptide. The residue at position 33 (Cys33) is a Sulfocysteine. 3 residues coordinate L-thyroxine: Lys38, Glu77, and Ser140.

The protein belongs to the transthyretin family. In terms of assembly, homotetramer. Dimer of dimers. In the homotetramer, subunits assemble around a central channel that can accommodate two ligand molecules. Interacts with RBP4. In terms of processing, sulfonation of the reactive cysteine Cys-33 enhances the stability of the native conformation of TTR, avoiding misassembly of the protein leading to amyloid formation. As to expression, detected in choroid plexus (at protein level). Detected in choroid plexus.

The protein resides in the secreted. Its function is as follows. Thyroid hormone-binding protein. Probably transports thyroxine from the bloodstream to the brain. This chain is Transthyretin (TTR), found in Tiliqua rugosa (Shingleback lizard).